The following is a 578-amino-acid chain: Cytochrome P450 monooxygenase fsoE (578 aa).

The helical transmembrane segment at 28 to 48 (LLMAVAITYAISWINWFFTSW) threads the bilayer. C517 contributes to the heme binding site.

The protein belongs to the cytochrome P450 family. The cofactor is heme.

It is found in the membrane. The catalysed reaction is 3-O-(beta-D-glucopyranosyl)-isomotiol + 2 reduced [NADPH--hemoprotein reductase] + 2 O2 = 2-deacetoxyfuscoatroside + 2 oxidized [NADPH--hemoprotein reductase] + 2 H2O + 3 H(+). It carries out the reaction 3-O-(beta-D-glucopyranosyl)-2alpha-hydroxyisomotiol + 2 reduced [NADPH--hemoprotein reductase] + 2 O2 = 2-deacetylfuscoatroside + 2 oxidized [NADPH--hemoprotein reductase] + 2 H2O + 3 H(+). The enzyme catalyses 3-O-(beta-D-glucopyranosyl)-2alpha-acetoxyisomotiol + 2 reduced [NADPH--hemoprotein reductase] + 2 O2 = fuscoatroside + 2 oxidized [NADPH--hemoprotein reductase] + 2 H2O + 3 H(+). It catalyses the reaction isomotiol + reduced [NADPH--hemoprotein reductase] + O2 = 19beta-hydroxyisomotiol + oxidized [NADPH--hemoprotein reductase] + H2O + H(+). The catalysed reaction is 2alpha-hydroxyisomotiol + reduced [NADPH--hemoprotein reductase] + O2 = 2alpha,19beta-dihydroxyisomotiol + oxidized [NADPH--hemoprotein reductase] + H2O + H(+). It carries out the reaction 2alpha,19beta-dihydroxyisomotiol + reduced [NADPH--hemoprotein reductase] + O2 = 2alpha-hydroxyismotiol-19-one + oxidized [NADPH--hemoprotein reductase] + 2 H2O + H(+). The enzyme catalyses 2alpha-hydroxyismotiol-19-one + 2 reduced [NADPH--hemoprotein reductase] + O2 = 2-deacetyl,3-deglucopyranosyl-fuscoatroside + 2 oxidized [NADPH--hemoprotein reductase] + H2O + 3 H(+). It functions in the pathway secondary metabolite biosynthesis; terpenoid biosynthesis. In terms of biological role, cytochrome P450 monooxygenase; part of the gene cluster that mediates the biosynthesis of the enfumafungin-type antibiotic, fuscoatroside. Within the pathway, fsoE catalyzes the oxidative cleavage of the c19-C20 bond within the E-ring, resulting in the formation of a carboxyl group and a methyl group. FsoE exhibits preferential substrate selectivity toward glycoside substrates over their aglycones. The fuscoatroside biosynthesis is initiated by the cyclization of 2,3(S)-oxidosqualene through FsoA's terpene cyclase (TC) domain, leading to the formation of the fernane skeleton isomotiol, harboring a fernane triterpene skeleton with a C8-C9 double bond. Subsequently, C2-alpha-hydroxylation mediated by fsoD results in the production of 2-alpha-hydroxy-isomotiol, which is further acetylated by fsoF. The glycosyltransferase (GT) domain of FsoA may convert isomotiol, 2-alpha-hydroxy-isomotiol, and the acetylated derivative of 2-alpha-hydroxy-isomotiol into their corresponding glycosides 3-O-(beta-D-glucopyranosyl)-isomotiol, 3-O-(beta-D-glucopyranosyl)-2-alpha-hydroxy-isomotiol, and 3-O-(beta-D-glucopyranosyl)-2-alpha-acetoxy-isomotiol, which then undergo oxidative cleavage under the action of fsoE to form s 2-deacetoxy-fuscoatroside, 2-deacetyl-fuscoatroside, and fuscoatroside, respectively. Although hydroxylation followed by acetylation of 3-O-(beta-D-glucopyranosyl)-isomotiol and 2-deacetoxy-fuscoatroside by fsoD and fsoF could not be ruled out, this process is likely to occur with difficulty due to bulky steric hindrance caused by the presence of a glycan at C3 in these compounds. Interestingly, fsoE can also utilize the aglycones isomotiol and 2-alpha-hydroxy-isomotiol as substrates to generate 19-beta-hydroxy-isomotiol and 2-alpha,19-beta-dihydroxy-isomotiol, respectively. These reactions occur with lower efficiency. Finally, fsoE can further convert 2-alpha,19-beta-dihydroxy-isomotiol into 2-alpha-hydroxy-ismotiol-19-one and 2-alpha-hydroxy-ismotiol-19-one into 2-deacetyl-3-deglucopyranosyl-fuscoatroside. The protein is Cytochrome P450 monooxygenase fsoE of Humicola fuscoatra.